The chain runs to 352 residues: DNA polymerase IV (352 aa).

Positions 4 to 185 constitute a UmuC domain; that stretch reads IIHVDMDCFF…LPLSKIPGVG (182 aa). Mg(2+) is bound by residues D8 and D103. The active site involves E104.

It belongs to the DNA polymerase type-Y family. In terms of assembly, monomer. Mg(2+) is required as a cofactor.

The protein resides in the cytoplasm. The catalysed reaction is DNA(n) + a 2'-deoxyribonucleoside 5'-triphosphate = DNA(n+1) + diphosphate. In terms of biological role, poorly processive, error-prone DNA polymerase involved in untargeted mutagenesis. Copies undamaged DNA at stalled replication forks, which arise in vivo from mismatched or misaligned primer ends. These misaligned primers can be extended by PolIV. Exhibits no 3'-5' exonuclease (proofreading) activity. May be involved in translesional synthesis, in conjunction with the beta clamp from PolIII. This is DNA polymerase IV from Yersinia pseudotuberculosis serotype O:1b (strain IP 31758).